A 469-amino-acid chain; its full sequence is Glutamate--tRNA ligase 2 (469 aa).

Positions 8 to 18 (PSPTGFLHVGG) match the 'HIGH' region motif. The 'KMSKS' region motif lies at 250 to 254 (KLSKR). Residue Lys-253 coordinates ATP.

The protein belongs to the class-I aminoacyl-tRNA synthetase family. Glutamate--tRNA ligase type 1 subfamily. Monomer.

It is found in the cytoplasm. The enzyme catalyses tRNA(Glu) + L-glutamate + ATP = L-glutamyl-tRNA(Glu) + AMP + diphosphate. Functionally, catalyzes the attachment of glutamate to tRNA(Glu) in a two-step reaction: glutamate is first activated by ATP to form Glu-AMP and then transferred to the acceptor end of tRNA(Glu). This chain is Glutamate--tRNA ligase 2, found in Thermotoga sp. (strain RQ2).